The chain runs to 130 residues: Prefoldin subunit alpha (130 aa).

This sequence belongs to the prefoldin subunit alpha family. In terms of assembly, heterohexamer of two alpha and four beta subunits.

It localises to the cytoplasm. Functionally, molecular chaperone capable of stabilizing a range of proteins. Seems to fulfill an ATP-independent, HSP70-like function in archaeal de novo protein folding. The protein is Prefoldin subunit alpha (pfdA) of Thermoplasma acidophilum (strain ATCC 25905 / DSM 1728 / JCM 9062 / NBRC 15155 / AMRC-C165).